The following is a 65-amino-acid chain: Sec-independent protein translocase protein TatA (65 aa).

Residues 9–29 (ILIIVLLVVVVFGVGKLPQVG) traverse the membrane as a helical segment. Residues 40–65 (RKASTGEDAKEEVETKEETKPAEKSE) are disordered. Basic and acidic residues predominate over residues 43–65 (STGEDAKEEVETKEETKPAEKSE).

This sequence belongs to the TatA/E family. Forms a complex with TatC.

Its subcellular location is the cell membrane. Its function is as follows. Part of the twin-arginine translocation (Tat) system that transports large folded proteins containing a characteristic twin-arginine motif in their signal peptide across membranes. TatA could form the protein-conducting channel of the Tat system. In Dehalococcoides mccartyi (strain ATCC BAA-2100 / JCM 16839 / KCTC 5957 / BAV1), this protein is Sec-independent protein translocase protein TatA.